Here is a 138-residue protein sequence, read N- to C-terminus: Probable phospholipase A2 homolog 1 (138 aa).

Residues 1–21 (MPPRSPLLALVFLAAGVLSSA) form the signal peptide. Intrachain disulfides connect Cys29–Cys56, Cys33–Cys62, Cys38–Cys109, Cys49–Cys69, Cys68–Cys93, and Cys75–Cys86. Residues Tyr48, Gly50, and Trp53 each contribute to the Ca(2+) site. His72 is an active-site residue. Asp73 serves as a coordination point for Ca(2+).

It belongs to the phospholipase A2 family. It depends on Ca(2+) as a cofactor.

It localises to the secreted. It catalyses the reaction a 1,2-diacyl-sn-glycero-3-phosphocholine + H2O = a 1-acyl-sn-glycero-3-phosphocholine + a fatty acid + H(+). In terms of biological role, PA2 catalyzes the calcium-dependent hydrolysis of the 2-acyl groups in 3-sn-phosphoglycerides. Releases lysophospholipids (LPLs) and free fatty acids (FFAs) from membrane phospholipids in response to hormones and other external stimuli. This chain is Probable phospholipase A2 homolog 1 (PLA2-I), found in Oryza sativa subsp. japonica (Rice).